The primary structure comprises 993 residues: Isoleucine--tRNA ligase (993 aa).

A 'HIGH' region motif is present at residues 64-74 (PYANGNIHIGH). Residue E621 coordinates L-isoleucyl-5'-AMP. The 'KMSKS' region signature appears at 662 to 666 (KMSKS). K665 serves as a coordination point for ATP.

The protein belongs to the class-I aminoacyl-tRNA synthetase family. IleS type 1 subfamily. As to quaternary structure, monomer.

The protein localises to the cytoplasm. The enzyme catalyses tRNA(Ile) + L-isoleucine + ATP = L-isoleucyl-tRNA(Ile) + AMP + diphosphate. Functionally, catalyzes the attachment of isoleucine to tRNA(Ile). As IleRS can inadvertently accommodate and process structurally similar amino acids such as valine, to avoid such errors it has two additional distinct tRNA(Ile)-dependent editing activities. One activity is designated as 'pretransfer' editing and involves the hydrolysis of activated Val-AMP. The other activity is designated 'posttransfer' editing and involves deacylation of mischarged Val-tRNA(Ile). The sequence is that of Isoleucine--tRNA ligase from Mesorhizobium japonicum (strain LMG 29417 / CECT 9101 / MAFF 303099) (Mesorhizobium loti (strain MAFF 303099)).